A 92-amino-acid polypeptide reads, in one-letter code: Putative pterin-4-alpha-carbinolamine dehydratase (92 aa).

The protein belongs to the pterin-4-alpha-carbinolamine dehydratase family.

It carries out the reaction (4aS,6R)-4a-hydroxy-L-erythro-5,6,7,8-tetrahydrobiopterin = (6R)-L-erythro-6,7-dihydrobiopterin + H2O. The chain is Putative pterin-4-alpha-carbinolamine dehydratase from Haloarcula marismortui (strain ATCC 43049 / DSM 3752 / JCM 8966 / VKM B-1809) (Halobacterium marismortui).